Reading from the N-terminus, the 263-residue chain is Small ribosomal subunit protein uS2 (263 aa).

Belongs to the universal ribosomal protein uS2 family.

The sequence is that of Small ribosomal subunit protein uS2 from Roseiflexus castenholzii (strain DSM 13941 / HLO8).